Consider the following 1148-residue polypeptide: Envelopment polyprotein (1148 aa).

An N-terminal signal peptide occupies residues 1–23 (MGELSPVCLYLLLQGLLLCNTGA). The Lumenal portion of the chain corresponds to 24–495 (ARNLNELKME…VPGLHGWATM (472 aa)). 6 disulfides stabilise this stretch: C34/C159, C68/C165, C117/C136, C141/C146, C183/C193, and C218/C257. The N-linked (GlcNAc...) asparagine; by host glycan is linked to N142. N357 carries an N-linked (GlcNAc...) asparagine; by host glycan. Cystine bridges form between C386-C445, C390-C399, C415-C434, and C462-C485. An N-linked (GlcNAc...) asparagine; by host glycan is attached at N409. The helical transmembrane segment at 496–516 (LLLLTFCFGWVLIPTITMILL) threads the bilayer. The Cytoplasmic segment spans residues 517–637 (KILIAFAYLC…LSLFRYRSRF (121 aa)). Residues 526 to 543 (CSKYNTDSKFRILIEKVK) are binding to the ribonucleoprotein. 2 CCHC-type zinc fingers span residues 555-575 (CEVC…RKSC) and 580-601 (CPYC…FKVC). Binding to the ribonucleoprotein stretches follow at residues 598-615 (FKVC…RKSL), 602-613 (KLRSRFQENLRK), and 621-635 (MQGC…RYRS). The ITAM domain occupies 621 to 644 (MQGCYRTLSLFRYRSRFFVGLVWC). A YxxL motif is present at residues 625–628 (YRTL). Residues 638–658 (FVGLVWCVLLVHHLIVWAASA) form a helical membrane-spanning segment. The Lumenal segment spans residues 659–1114 (ETQNLNAGWT…EWILGVLNGN (456 aa)). 8 disulfides stabilise this stretch: C745–C780, C749–C787, C761–C894, C775–C905, C790–C913, C816–C825, C833–C842, and C873–C877. The tract at residues 767 to 787 (YEYETGWGCNPPDCPGVGTGC) is fusion loop. A glycan (N-linked (GlcNAc...) asparagine; by host) is linked at N937. Cystine bridges form between C979/C1009, C1002/C1054, C1019/C1024, C1055/C1060, and C1094/C1098. Residues 1115-1135 (WMVVAVLVVLLILSILLFTLC) traverse the membrane as a helical segment. 2 binding to the ribonucleoprotein regions span residues 1131 to 1143 (LFTL…PSYR) and 1131 to 1148 (LFTL…EHKP). Residues 1136–1148 (CPRRPSYRKEHKP) lie on the Cytoplasmic side of the membrane.

The protein belongs to the hantavirus envelope glycoprotein family. In terms of assembly, homodimer. Homotetramer; forms heterotetrameric Gn-Gc spikes in the pre-fusion conformation. Interacts (via C-terminus) with the nucleoprotein. Interacts with host TUFM; this interaction contributes to the virus-induced degradation of mitochondria by autophagy, which leads to degradation of host MAVS and inhibition of type I interferon (IFN) responses. Interacts with host MAP1LC3B; this interaction contributes to the virus-induced degradation of mitochondria by autophagy, which leads to degradation of host MAVS and inhibition of type I interferon (IFN) responses. Homodimer. Homotetramer; forms heterotetrameric Gn-Gc spikes in the pre-fusion conformation. Homotrimer; forms homotrimer in the post-fusion conformation at acidic pH. Interacts (via C-terminus) with the nucleoprotein. Post-translationally, envelope polyprotein precursor is quickly cleaved in vivo just after synthesis, presumably by host signal peptidase.

The protein resides in the virion membrane. It is found in the host cell surface. The protein localises to the host Golgi apparatus membrane. Its subcellular location is the host endoplasmic reticulum membrane. It localises to the host mitochondrion. Functionally, forms homotetramers with glycoprotein C at the surface of the virion. Attaches the virion to host cell receptors including integrin ITGAV/ITGB3. This attachment induces virion internalization predominantly through clathrin-dependent endocytosis. Mediates the assembly and budding of infectious virus particles through its interaction with the nucleocapsid protein and the viral genome. May dysregulate normal immune and endothelial cell responses through an ITAM motif. Translocates to mitochondria, binds to host TUFM and recruits MAP1LC3B. These interactions induce mitochondrial autophagy and therefore destruction of host MAVS leading to inhibition of type I interferon (IFN) responses. Concomitant breakdown of glycoprotein N is apparently prevented by the nucleoprotein that may inhibit Gn-stimulated autophagosome-lysosome fusion. Interacts with the viral genomic RNA. In terms of biological role, forms homotetramers with glycoprotein N at the surface of the virion. Attaches the virion to host cell receptors including integrin ITGAV/ITGB3. This attachment induces virion internalization predominantly through clathrin-dependent endocytosis. Class II fusion protein that promotes fusion of viral membrane with host endosomal membrane after endocytosis of the virion. The sequence is that of Envelopment polyprotein (GP) from Homo sapiens (Human).